Here is a 203-residue protein sequence, read N- to C-terminus: Probable cytochrome c oxidase subunit 3 (203 aa).

Transmembrane regions (helical) follow at residues 30 to 50 (IVWL…YFSA), 71 to 91 (VPVT…VFAA), 96 to 116 (IFGL…FVLG), 143 to 163 (ATGF…FLLV), and 179 to 199 (IVVS…FTVI).

This sequence belongs to the cytochrome c oxidase subunit 3 family.

The protein localises to the cell membrane. It catalyses the reaction 4 Fe(II)-[cytochrome c] + O2 + 8 H(+)(in) = 4 Fe(III)-[cytochrome c] + 2 H2O + 4 H(+)(out). The polypeptide is Probable cytochrome c oxidase subunit 3 (ctaE) (Mycobacterium bovis (strain ATCC BAA-935 / AF2122/97)).